The following is a 302-amino-acid chain: Aspartate carbamoyltransferase catalytic subunit (302 aa).

R54 and T55 together coordinate carbamoyl phosphate. K82 provides a ligand contact to L-aspartate. Residues R104, H132, and Q135 each coordinate carbamoyl phosphate. 2 residues coordinate L-aspartate: R165 and R217. Carbamoyl phosphate-binding residues include G257 and P258.

Belongs to the aspartate/ornithine carbamoyltransferase superfamily. ATCase family. In terms of assembly, heterododecamer (2C3:3R2) of six catalytic PyrB chains organized as two trimers (C3), and six regulatory PyrI chains organized as three dimers (R2).

It carries out the reaction carbamoyl phosphate + L-aspartate = N-carbamoyl-L-aspartate + phosphate + H(+). Its pathway is pyrimidine metabolism; UMP biosynthesis via de novo pathway; (S)-dihydroorotate from bicarbonate: step 2/3. Functionally, catalyzes the condensation of carbamoyl phosphate and aspartate to form carbamoyl aspartate and inorganic phosphate, the committed step in the de novo pyrimidine nucleotide biosynthesis pathway. In Thermus thermophilus (strain ATCC BAA-163 / DSM 7039 / HB27), this protein is Aspartate carbamoyltransferase catalytic subunit.